Reading from the N-terminus, the 876-residue chain is Leucine--tRNA ligase (876 aa).

The 'HIGH' region motif lies at 43–53 (PYPSGRIHMGH). The 'KMSKS' region motif lies at 632-636 (KMSKS). Residue lysine 635 participates in ATP binding.

This sequence belongs to the class-I aminoacyl-tRNA synthetase family.

Its subcellular location is the cytoplasm. It carries out the reaction tRNA(Leu) + L-leucine + ATP = L-leucyl-tRNA(Leu) + AMP + diphosphate. The chain is Leucine--tRNA ligase from Agrobacterium fabrum (strain C58 / ATCC 33970) (Agrobacterium tumefaciens (strain C58)).